Reading from the N-terminus, the 161-residue chain is Eukaryotic translation initiation factor 5A-1 (161 aa).

The segment covering 1–12 has biased composition (basic and acidic residues); that stretch reads MSDEEHQFESKA. The disordered stretch occupies residues 1-21; sequence MSDEEHQFESKADAGASKTYP. Lys-52 carries the post-translational modification Hypusine.

Belongs to the eIF-5A family. Post-translationally, lys-52 undergoes hypusination, a unique post-translational modification that consists in the addition of a butylamino group from spermidine to lysine side chain, leading to the formation of the unusual amino acid hypusine. eIF-5As are the only known proteins to undergo this modification, which is essential for their function.

Functionally, translation factor that promotes translation elongation and termination, particularly upon ribosome stalling at specific amino acid sequence contexts. Binds between the exit (E) and peptidyl (P) site of the ribosome and promotes rescue of stalled ribosome: specifically required for efficient translation of polyproline-containing peptides as well as other motifs that stall the ribosome. Acts as a ribosome quality control (RQC) cofactor by joining the RQC complex to facilitate peptidyl transfer during CAT tailing step. This Medicago sativa (Alfalfa) protein is Eukaryotic translation initiation factor 5A-1.